Consider the following 273-residue polypeptide: Type II pantothenate kinase (273 aa).

D8–K15 serves as a coordination point for ATP. The active-site Proton acceptor is E76. Residues T105, G127–M131, F143, and S230 each bind ATP.

Belongs to the type II pantothenate kinase family. As to quaternary structure, homodimer.

The protein localises to the cytoplasm. The catalysed reaction is (R)-pantothenate + ATP = (R)-4'-phosphopantothenate + ADP + H(+). It functions in the pathway cofactor biosynthesis; coenzyme A biosynthesis; CoA from (R)-pantothenate: step 1/5. In terms of biological role, catalyzes the phosphorylation of pantothenate (Pan), the first step in CoA biosynthesis. This chain is Type II pantothenate kinase, found in Bacillus cereus (strain ATCC 14579 / DSM 31 / CCUG 7414 / JCM 2152 / NBRC 15305 / NCIMB 9373 / NCTC 2599 / NRRL B-3711).